The following is a 365-amino-acid chain: Fructose-1,6-bisphosphate aldolase/phosphatase (365 aa).

Catalysis depends on Asp11, which acts as the Proton acceptor; for FBP phosphatase activity. Residues Asp11, His18, Asp52, and Asp53 each coordinate Mg(2+). A beta-D-fructose 1,6-bisphosphate-binding site is contributed by His18. His18 contributes to the dihydroxyacetone phosphate binding site. Tyr90 is a beta-D-fructose 1,6-bisphosphate binding site. A Mg(2+)-binding site is contributed by Gln94. Residue 103-104 (GN) participates in beta-D-fructose 1,6-bisphosphate binding. Residue Asp131 coordinates Mg(2+). Lys132 contacts beta-D-fructose 1,6-bisphosphate. Position 132 (Lys132) interacts with dihydroxyacetone phosphate. Tyr228 serves as the catalytic Proton donor/acceptor; for FBP aldolase activity. The Mg(2+) site is built by Lys231, Asp232, and Asp233. Lys231 (schiff-base intermediate with DHAP; for FBP aldolase activity) is an active-site residue. Beta-D-fructose 1,6-bisphosphate contacts are provided by residues 241 to 242 (QS), Arg265, Asp286, and Tyr347. Residues Arg265 and Asp286 each contribute to the dihydroxyacetone phosphate site.

Belongs to the FBP aldolase/phosphatase family. In terms of assembly, homooctamer; dimer of tetramers. Requires Mg(2+) as cofactor.

It carries out the reaction beta-D-fructose 1,6-bisphosphate + H2O = beta-D-fructose 6-phosphate + phosphate. It catalyses the reaction beta-D-fructose 1,6-bisphosphate = D-glyceraldehyde 3-phosphate + dihydroxyacetone phosphate. The protein operates within carbohydrate biosynthesis; gluconeogenesis. In terms of biological role, catalyzes two subsequent steps in gluconeogenesis: the aldol condensation of dihydroxyacetone phosphate (DHAP) and glyceraldehyde-3-phosphate (GA3P) to fructose-1,6-bisphosphate (FBP), and the dephosphorylation of FBP to fructose-6-phosphate (F6P). The protein is Fructose-1,6-bisphosphate aldolase/phosphatase of Methanothermobacter marburgensis (strain ATCC BAA-927 / DSM 2133 / JCM 14651 / NBRC 100331 / OCM 82 / Marburg) (Methanobacterium thermoautotrophicum).